We begin with the raw amino-acid sequence, 153 residues long: MPQYNKLQVEAIFGGTVIDHIPAQVGLKLLSLFKWLHTKERITMGLNLPSNQQKKKDLIKLENVLLNEDQANQLSIYAPLATVNQIKNYIVIKKQKLKLPKIINGILSCPNENCISKVELKAADFIVKIKLNKIYLKCKYCERDFDHKIVTKI.

4 residues coordinate Zn(2+): Cys-109, Cys-114, Cys-138, and Cys-141.

Belongs to the PyrI family. As to quaternary structure, contains catalytic and regulatory chains. Zn(2+) is required as a cofactor.

Its function is as follows. Involved in allosteric regulation of aspartate carbamoyltransferase. This is Aspartate carbamoyltransferase regulatory chain from Wigglesworthia glossinidia brevipalpis.